A 379-amino-acid chain; its full sequence is Cytochrome b (379 aa).

8 helical membrane passes run 33-53, 77-98, 113-133, 178-198, 226-246, 288-308, 320-340, and 347-367; these read FGSL…FLAM, WLIR…FLHV, WNIG…GYVL, FFAF…VHLL, IKDV…VLFS, LGGV…PILH, LSQC…WIGG, and FITI…LALP. The heme b site is built by His83 and His97. 2 residues coordinate heme b: His182 and His196.

Belongs to the cytochrome b family. As to quaternary structure, the cytochrome bc1 complex contains 11 subunits: 3 respiratory subunits (MT-CYB, CYC1 and UQCRFS1), 2 core proteins (UQCRC1 and UQCRC2) and 6 low-molecular weight proteins (UQCRH/QCR6, UQCRB/QCR7, UQCRQ/QCR8, UQCR10/QCR9, UQCR11/QCR10 and a cleavage product of UQCRFS1). This cytochrome bc1 complex then forms a dimer. It depends on heme b as a cofactor.

The protein localises to the mitochondrion inner membrane. In terms of biological role, component of the ubiquinol-cytochrome c reductase complex (complex III or cytochrome b-c1 complex) that is part of the mitochondrial respiratory chain. The b-c1 complex mediates electron transfer from ubiquinol to cytochrome c. Contributes to the generation of a proton gradient across the mitochondrial membrane that is then used for ATP synthesis. The sequence is that of Cytochrome b (MT-CYB) from Sciurus niger (Eastern fox squirrel).